We begin with the raw amino-acid sequence, 457 residues long: Glycerol-3-phosphate acyltransferase 3 (457 aa).

The chain crosses the membrane as a helical span at residues Trp-14–Ile-34. Phosphoserine occurs at positions 68 and 77. The next 2 helical transmembrane spans lie at Ile-137 to Leu-157 and Val-161 to Leu-181. The short motif at His-229–Asp-234 is the HXXXXD motif element. The interval Gly-429–Leu-457 is disordered. Residues Gly-431 to Asn-444 show a composition bias toward polar residues.

The protein belongs to the 1-acyl-sn-glycerol-3-phosphate acyltransferase family.

The protein localises to the endoplasmic reticulum membrane. It carries out the reaction sn-glycerol 3-phosphate + an acyl-CoA = a 1-acyl-sn-glycero-3-phosphate + CoA. It catalyses the reaction a 1-acyl-sn-glycero-3-phosphate + an acyl-CoA = a 1,2-diacyl-sn-glycero-3-phosphate + CoA. The catalysed reaction is dodecanoyl-CoA + sn-glycerol 3-phosphate = 1-dodecanoyl-sn-glycerol 3-phosphate + CoA. The enzyme catalyses sn-glycerol 3-phosphate + hexadecanoyl-CoA = 1-hexadecanoyl-sn-glycero-3-phosphate + CoA. It carries out the reaction sn-glycerol 3-phosphate + (9Z)-octadecenoyl-CoA = 1-(9Z-octadecenoyl)-sn-glycero-3-phosphate + CoA. It catalyses the reaction (9Z,12Z)-octadecadienoyl-CoA + sn-glycerol 3-phosphate = 1-(9Z,12Z)-octadecadienoyl-sn-glycero-3-phosphate + CoA. The catalysed reaction is 1-tetradecanoyl-sn-glycerol 3-phosphate + (9Z)-octadecenoyl-CoA = 1-tetradecanoyl-2-(9Z)-octadecenoyl-sn-glycero-3-phosphate + CoA. The enzyme catalyses 1-hexadecanoyl-sn-glycero-3-phosphate + (9Z)-octadecenoyl-CoA = 1-hexadecanoyl-2-(9Z-octadecenoyl)-sn-glycero-3-phosphate + CoA. It carries out the reaction 1-(9Z-octadecenoyl)-sn-glycero-3-phosphate + (9Z)-octadecenoyl-CoA = 1,2-di-(9Z-octadecenoyl)-sn-glycero-3-phosphate + CoA. It catalyses the reaction 1-(6Z,9Z,12Z-octadecatrienoyl)-sn-glycero-3-phosphate + (9Z)-octadecenoyl-CoA = (6Z,9Z,12Z)-octadecatrienoyl-2-(9Z)-octadecenoyl-sn-glycero-3-phosphate + CoA. The catalysed reaction is 1-(9Z,12Z,15Z)-octadecatrienoyl-sn-glycero-3-phosphate + (9Z)-octadecenoyl-CoA = 1-(9Z,12Z,15Z)-octadecatrienoyl-2-(9Z)-octadecenoyl-sn-glycero-3-phosphate + CoA. The enzyme catalyses 1-(9Z-octadecenoyl)-sn-glycero-3-phosphate + tetradecanoyl-CoA = 1-(9Z)-octadecenoyl-2-tetradecanoyl-sn-glycero-3-phosphate + CoA. It carries out the reaction 1-(9Z-octadecenoyl)-sn-glycero-3-phosphate + hexadecanoyl-CoA = 1-(9Z)-octadecenoyl-2-hexadecanoyl-sn-glycero-3-phosphate + CoA. It catalyses the reaction 1-(9Z-octadecenoyl)-sn-glycero-3-phosphate + octadecanoyl-CoA = 1-(9Z-octadecenoyl)-2-octadecanoyl-sn-glycero-3-phosphate + CoA. The catalysed reaction is 1-(9Z-octadecenoyl)-sn-glycero-3-phosphate + (9Z,12Z)-octadecadienoyl-CoA = 1-(9Z)-octadecenoyl-2-(9Z,12Z)-octadecadienoyl-sn-glycero-3-phosphate + CoA. The enzyme catalyses 1-(5Z,8Z,11Z,14Z-eicosatetraenoyl)-sn-glycero-3-phosphate + (9Z)-octadecenoyl-CoA = 1-(5Z,8Z,11Z,14Z)-eicosatetraenoyl-2-(9Z)-octadecenoyl-sn-glycero-3-phosphate + CoA. Its pathway is glycerolipid metabolism; triacylglycerol biosynthesis. The protein operates within phospholipid metabolism; CDP-diacylglycerol biosynthesis; CDP-diacylglycerol from sn-glycerol 3-phosphate: step 1/3. Functionally, converts glycerol-3-phosphate to 1-acyl-sn-glycerol-3-phosphate (lysophosphatidic acid or LPA) by incorporating an acyl moiety at the sn-1 position of the glycerol backbone. Also converts LPA into 1,2-diacyl-sn-glycerol-3-phosphate (phosphatidic acid or PA) by incorporating an acyl moiety at the sn-2 position of the glycerol backbone. Protects cells against lipotoxicity. This is Glycerol-3-phosphate acyltransferase 3 from Rattus norvegicus (Rat).